Consider the following 61-residue polypeptide: Metallothionein-2D (61 aa).

N-acetylmethionine is present on M1. The interval 1–29 is beta; sequence MDPNCSCATRDSCACASSCKCKECKCTSC. Residues C5, C7, C13, C15, C19, C21, C24, C26, C29, C33, C34, C36, C37, C41, C44, C48, C50, C57, C59, and C60 each contribute to the a divalent metal cation site. Residues 30–61 form an alpha region; sequence KKSCCSCCPAGCTKCAQGCICKGASDKCSCCA.

Belongs to the metallothionein superfamily. Type 1 family. As to quaternary structure, monomer.

Its function is as follows. Metallothioneins have a high content of cysteine residues that bind various heavy metals; these proteins are transcriptionally regulated by both heavy metals and glucocorticoids. This Oryctolagus cuniculus (Rabbit) protein is Metallothionein-2D.